The chain runs to 701 residues: Interleukin-1 receptor accessory protein-like 1-A (701 aa).

Positions 1-19 are cleaved as a signal peptide; the sequence is MTALNPVLFLLCGVSVSLS. Over 20 to 361 the chain is Extracellular; the sequence is LKVVSKRGSV…IGKRVELMYT (342 aa). The 101-residue stretch at 33-133 folds into the Ig-like C2-type 1 domain; that stretch reads TDWSVDYLKY…RNSTFCMKVS (101 aa). Cys54 and Cys121 are joined by a disulfide. Residues Asn64, Asn125, Asn141, Asn216, Asn267, and Asn334 are each glycosylated (N-linked (GlcNAc...) asparagine). 2 consecutive Ig-like C2-type domains span residues 146 to 235 and 245 to 353; these read CYNS…TYLS and PRIL…VQIG. An intrachain disulfide couples Cys167 to Cys219. Residues Cys270 and Cys337 are joined by a disulfide bond. Residues 362–382 traverse the membrane as a helical segment; it reads VELAGGLGAILLLLALLLSVY. Residues 383–701 lie on the Cytoplasmic side of the membrane; that stretch reads KCYRIELLLC…RETSISSVIW (319 aa). Positions 407 to 563 constitute a TIR domain; sequence KEYDAYLSYS…RFWKQLRYTM (157 aa). The active site involves Glu495. The tract at residues 568-701 is required for synaptic vesicle accumulation during synaptogenesis; that stretch reads PQQTITNHAL…RETSISSVIW (134 aa).

This sequence belongs to the interleukin-1 receptor family.

It is found in the cell membrane. The protein localises to the cytoplasm. The enzyme catalyses NAD(+) + H2O = ADP-D-ribose + nicotinamide + H(+). Its function is as follows. May regulate secretion and presynaptic differentiation through inhibition of the activity of N-type voltage-gated calcium channel. During presynaptic differentiation may regulate both synaptic vesicle accumulation in axon terminals and subsequent axon terminal remodeling. The polypeptide is Interleukin-1 receptor accessory protein-like 1-A (il1rapl1a) (Danio rerio (Zebrafish)).